The following is a 192-amino-acid chain: Fe/S biogenesis protein NfuA (192 aa).

Residues C149 and C152 each coordinate [4Fe-4S] cluster.

This sequence belongs to the NfuA family. As to quaternary structure, homodimer. [4Fe-4S] cluster is required as a cofactor.

In terms of biological role, involved in iron-sulfur cluster biogenesis. Binds a 4Fe-4S cluster, can transfer this cluster to apoproteins, and thereby intervenes in the maturation of Fe/S proteins. Could also act as a scaffold/chaperone for damaged Fe/S proteins. The protein is Fe/S biogenesis protein NfuA of Idiomarina loihiensis (strain ATCC BAA-735 / DSM 15497 / L2-TR).